A 195-amino-acid chain; its full sequence is Small ribosomal subunit protein eS7 (195 aa).

A phosphothreonine mark is found at Thr146 and Thr151. A phosphoserine mark is found at Ser172 and Ser173.

This sequence belongs to the eukaryotic ribosomal protein eS7 family. As to quaternary structure, component of the small ribosomal subunit (SSU). Mature yeast ribosomes consist of a small (40S) and a large (60S) subunit. The 40S small subunit contains 1 molecule of ribosomal RNA (18S rRNA) and at least 33 different proteins. The large 60S subunit contains 3 rRNA molecules (25S, 5.8S and 5S rRNA) and at least 46 different proteins. Interacts with snoRNA U3. uS11 interacts with MPP10. Component of the ribosomal small subunit (SSU) processome composed of at least 40 protein subunits and snoRNA U3.

It is found in the cytoplasm. Its subcellular location is the nucleus. The protein localises to the nucleolus. In terms of biological role, component of the ribosome, a large ribonucleoprotein complex responsible for the synthesis of proteins in the cell. The small ribosomal subunit (SSU) binds messenger RNAs (mRNAs) and translates the encoded message by selecting cognate aminoacyl-transfer RNA (tRNA) molecules. The large subunit (LSU) contains the ribosomal catalytic site termed the peptidyl transferase center (PTC), which catalyzes the formation of peptide bonds, thereby polymerizing the amino acids delivered by tRNAs into a polypeptide chain. The nascent polypeptides leave the ribosome through a tunnel in the LSU and interact with protein factors that function in enzymatic processing, targeting, and the membrane insertion of nascent chains at the exit of the ribosomal tunnel. eS7 is involved in nucleolar processing of pre-18S ribosomal RNA and ribosome assembly. In Schizosaccharomyces pombe (strain 972 / ATCC 24843) (Fission yeast), this protein is Small ribosomal subunit protein eS7 (rps7).